We begin with the raw amino-acid sequence, 3038 residues long: Lovastatin nonaketide synthase, polyketide synthase component (3038 aa).

The 440-residue stretch at 8 to 447 (NEPIVVVGSG…GTNAHAIIEE (440 aa)) folds into the Ketosynthase family 3 (KS3) domain. Catalysis depends on for beta-ketoacyl synthase activity residues C181, H320, and H367. Residues 562-889 (IFTGQGAQWP…GKNDLDSFSR (328 aa)) form a malonyl-CoA:ACP transacylase (MAT) domain region. S656 acts as the For malonyltransferase activity in catalysis. The segment at 695–757 (AMLAAGMSFE…DESTFARLLK (63 aa)) is lovC-binding. Residues 953-1089 (HLLLGKLSEY…GQLALTIEDV (137 aa)) form an N-terminal hotdog fold region. Residues 953–1263 (HLLLGKLSEY…ENITFKPFSP (311 aa)) are dehydratase (DH) domain. Residues 953-1267 (HLLLGKLSEY…FKPFSPPDAS (315 aa)) enclose the PKS/mFAS DH domain. H985 acts as the Proton acceptor; for dehydratase activity in catalysis. A C-terminal hotdog fold region spans residues 1107-1267 (EEHPHMNRVN…FKPFSPPDAS (161 aa)). D1174 serves as the catalytic Proton donor; for dehydratase activity. The interval 1443-1543 (LEIGAGTGGA…ARSLLKPGGQ (101 aa)) is methyltransferase (CMet) domain. Residues 2139–2437 (TLPTRVRSID…KIPEYRGAKA (299 aa)) form a ketoreductase (KR) domain region. In terms of domain architecture, Carrier spans 2463–2538 (QIVIDGLSAK…DLANEAAARL (76 aa)). S2498 carries the post-translational modification O-(pantetheine 4'-phosphoryl)serine. The interval 2546–2602 (VAATDGGAESTDNTSENEVSGREDTDLSAAATITEPSSADEDDTEPGDEDVPRSHHP) is disordered. The span at 2583-2594 (SADEDDTEPGDE) shows a compositional bias: acidic residues. The segment at 2602–2952 (PLSLGQEYSW…PTSNQPAPLF (351 aa)) is inactive Condensation domain.

In terms of assembly, homodimer. Each MAT domain from the lovB homodimer binds one lovC molecule to form the final active lovB-lovC megasynthase complex. It depends on pantetheine 4'-phosphate as a cofactor.

The enzyme catalyses holo-[lovastatin nonaketide synthase] + 9 malonyl-CoA + S-adenosyl-L-methionine + 11 NADPH + 19 H(+) = dihydromonacolin L-[lovastatin nonaketide synthase] + S-adenosyl-L-homocysteine + 9 CO2 + 11 NADP(+) + 9 CoA + 6 H2O. The protein operates within polyketide biosynthesis; lovastatin biosynthesis. Lovastatin nonaketide synthase; part of the gene cluster that mediates the biosynthesis of lovastatin (also known as mevinolin, mevacor or monacolin K), a hypolipidemic inhibitor of (3S)-hydroxymethylglutaryl-coenzyme A (HMG-CoA) reductase (HMGR). The first step in the biosynthesis of lovastatin is the production of dihydromonacolin L acid by the lovastatin nonaketide synthase lovB and the trans-acting enoyl reductase lovC (called the lovB-lovC megasynthase complex) via condensation of one acetyl-CoA unit and 8 malonyl-CoA units. The formation of the LovB/C complex is essential for the integrity of the catalytic chamber to the complete total synthesis of DML acid. Dihydromonacolin L acid is released from lovB by the thioesterase lovG. Next, dihydromonacolin L acid is oxidized by the dihydromonacolin L monooxygenase lovA twice to form monacolin J acid. The 2-methylbutyrate moiety of lovastatin is synthesized by the lovastatin diketide synthase lovF via condensation of one acetyl-CoA unit and one malonyl-CoA unit. Finally, the covalent attachment of this moiety to monacolin J acid is catalyzed by the transesterase lovD to yield lovastatin. LovD has broad substrate specificity and can also convert monacolin J to simvastatin using alpha-dimethylbutanoyl-S-methyl-3-mercaptopropionate (DMB-S-MMP) as the thioester acyl donor, and can also catalyze the reverse reaction and function as hydrolase in vitro. LovD has much higher activity with LovF-bound 2-methylbutanoate than with free diketide substrates. This Aspergillus terreus protein is Lovastatin nonaketide synthase, polyketide synthase component.